The primary structure comprises 258 residues: 5'-nucleotidase SurE (258 aa).

The a divalent metal cation site is built by Asp8, Asp9, Ser39, and Asn95.

Belongs to the SurE nucleotidase family. The cofactor is a divalent metal cation.

The protein resides in the cytoplasm. The enzyme catalyses a ribonucleoside 5'-phosphate + H2O = a ribonucleoside + phosphate. Functionally, nucleotidase that shows phosphatase activity on nucleoside 5'-monophosphates. This is 5'-nucleotidase SurE from Methanobrevibacter smithii (strain ATCC 35061 / DSM 861 / OCM 144 / PS).